Reading from the N-terminus, the 361-residue chain is Uroporphyrinogen decarboxylase (361 aa).

Substrate contacts are provided by residues 27–31 (RQAGR), D77, Y154, T209, and H327.

This sequence belongs to the uroporphyrinogen decarboxylase family. Homodimer.

It localises to the cytoplasm. The catalysed reaction is uroporphyrinogen III + 4 H(+) = coproporphyrinogen III + 4 CO2. Its pathway is porphyrin-containing compound metabolism; protoporphyrin-IX biosynthesis; coproporphyrinogen-III from 5-aminolevulinate: step 4/4. Functionally, catalyzes the decarboxylation of four acetate groups of uroporphyrinogen-III to yield coproporphyrinogen-III. This chain is Uroporphyrinogen decarboxylase, found in Coxiella burnetii (strain Dugway 5J108-111).